Consider the following 372-residue polypeptide: Glutamate 5-kinase (372 aa).

Lys14 lines the ATP pocket. Residues Ser54, Asp141, and Asn153 each contribute to the substrate site. Residue 173–174 (TD) participates in ATP binding. The PUA domain occupies 280–358 (RGHVVIDDGA…GEIESVLGYM (79 aa)).

It belongs to the glutamate 5-kinase family.

It is found in the cytoplasm. The catalysed reaction is L-glutamate + ATP = L-glutamyl 5-phosphate + ADP. Its pathway is amino-acid biosynthesis; L-proline biosynthesis; L-glutamate 5-semialdehyde from L-glutamate: step 1/2. Catalyzes the transfer of a phosphate group to glutamate to form L-glutamate 5-phosphate. This chain is Glutamate 5-kinase, found in Paraburkholderia phytofirmans (strain DSM 17436 / LMG 22146 / PsJN) (Burkholderia phytofirmans).